The chain runs to 24 residues: Brevinin-1JDc (24 aa).

Cysteines 18 and 24 form a disulfide.

Expressed by the skin glands.

The protein localises to the secreted. Functionally, has antibacterial activity against E.coli ATCC 25992 (MIC=49 uM), E.coli CIB 84492 (MIC=25 uM), S.aureus ATCC 25923 (MIC=6 uM) and S.aureus CIB 85462 (MIC=3 uM). This Odorrana jingdongensis (Jingdong frog) protein is Brevinin-1JDc.